The sequence spans 365 residues: DNA replication and repair protein RecF (365 aa).

Position 30-37 (30-37) interacts with ATP; that stretch reads GNNGMGKT.

It belongs to the RecF family.

The protein localises to the cytoplasm. In terms of biological role, the RecF protein is involved in DNA metabolism; it is required for DNA replication and normal SOS inducibility. RecF binds preferentially to single-stranded, linear DNA. It also seems to bind ATP. In Parabacteroides distasonis (strain ATCC 8503 / DSM 20701 / CIP 104284 / JCM 5825 / NCTC 11152), this protein is DNA replication and repair protein RecF.